The following is a 386-amino-acid chain: tRNA-specific adenosine deaminase subunit tad2 (386 aa).

The region spanning 212-322 (TQHETYMKLA…GNDRFGGCGS (111 aa)) is the CMP/dCMP-type deaminase domain. His263 lines the Zn(2+) pocket. Glu265 acts as the Proton donor in catalysis. Positions 293 and 296 each coordinate Zn(2+).

It belongs to the cytidine and deoxycytidylate deaminase family. ADAT2 subfamily. In terms of assembly, heterodimer with Tad3. Requires Zn(2+) as cofactor.

It catalyses the reaction adenosine(34) in tRNA + H2O + H(+) = inosine(34) in tRNA + NH4(+). Structural subunit of tRNA-specific adenosine deaminase, which deaminates adenosine-34 (the first, also called wobble position of the anticodon) to inosine in many tRNAs. Inosine-34 allows the decoding of 3 different nucleotides at the third position of mRNA codons, as inosine is able to pair with U, C, and A. The wobble inosine tRNA modification is essential for cell cycle progression in the G1/S and G2/M transitions in fission yeast. In Schizosaccharomyces pombe (strain 972 / ATCC 24843) (Fission yeast), this protein is tRNA-specific adenosine deaminase subunit tad2 (tad2).